An 87-amino-acid chain; its full sequence is Beta-toxin Ct1a (87 aa).

An N-terminal signal peptide occupies residues 1 to 19; the sequence is MNSLLMITACLALIGTVWA. An LCN-type CS-alpha/beta domain is found at 20 to 85; it reads KEGYLVNHST…VWPLPKKTCN (66 aa). Cystine bridges form between Cys-31/Cys-84, Cys-35/Cys-60, Cys-44/Cys-65, and Cys-48/Cys-67. Position 85 is an asparagine amide (Asn-85).

Belongs to the long (4 C-C) scorpion toxin superfamily. Sodium channel inhibitor family. Beta subfamily. As to expression, expressed by the venom gland.

The protein resides in the secreted. Its function is as follows. Beta toxins bind voltage-independently at site-4 of sodium channels (Nav) and shift the voltage of activation toward more negative potentials thereby affecting sodium channel activation and promoting spontaneous and repetitive firing. Is lethal to mice but does not show toxicity to freshwater shrimp and crickets. This chain is Beta-toxin Ct1a, found in Centruroides tecomanus (Scorpion).